Consider the following 88-residue polypeptide: Transcription factor ILI5 (88 aa).

Positions 1 to 54 constitute a bHLH domain; that stretch reads MSSRRSSRGSISEEEINELISKLQSLLPNSRRRGSSQASTTKLLKETCNYIKSL.

This sequence belongs to the bHLH protein family. Interacts with APG.

It is found in the nucleus. Atypical and probable non DNA-binding bHLH transcription factor that acts as a positive regulator of grain size. Binds the transcription repressor APG and forms a heterodimer of antagonistic basic helix-loop-helix transcription factors that regulates grain length and weight by controlling cell elongation in lemma and palea. In Oryza sativa subsp. indica (Rice), this protein is Transcription factor ILI5 (ILI5).